The sequence spans 318 residues: Solute carrier family 25 member 34 (318 aa).

Solcar repeat units follow at residues 18–111 (VSPA…ACQA), 115–208 (QQPG…AKAW), and 218–309 (DSWL…LRKL). Helical transmembrane passes span 21-41 (AVDLVLGASACCLACVFTNPL), 59-79 (TYPRPYRGFVSSVTAVARADG), 112-134 (GLTQQPGGTVVAGAVAGALGAFV), 184-205 (VGAAVPRVTVGSAAQLATFTSA), 220-240 (WLATLAGGMISSIAVVAVMAP), and 292-315 (LGPHTILSMFFWDELRKLALRAQH).

Belongs to the mitochondrial carrier (TC 2.A.29) family.

The protein localises to the mitochondrion inner membrane. The enzyme catalyses a dicarboxylate(in) + sulfate(out) = a dicarboxylate(out) + sulfate(in). In terms of biological role, putative antiporter that exchanges dicarboxylates and sulfur oxoanions across the inner membrane of mitochondria. This is Solute carrier family 25 member 34 (Slc25a34) from Rattus norvegicus (Rat).